Here is a 334-residue protein sequence, read N- to C-terminus: GTP 3',8-cyclase (334 aa).

Residues 13 to 239 (KFHRKFYYLR…KVRSHHDGPA (227 aa)) form the Radical SAM core domain. A GTP-binding site is contributed by R22. Positions 29 and 33 each coordinate [4Fe-4S] cluster. Y35 contacts S-adenosyl-L-methionine. C36 is a binding site for [4Fe-4S] cluster. R73 contacts GTP. G77 contributes to the S-adenosyl-L-methionine binding site. T104 contacts GTP. S128 is an S-adenosyl-L-methionine binding site. A GTP-binding site is contributed by K165. M199 lines the S-adenosyl-L-methionine pocket. 2 residues coordinate [4Fe-4S] cluster: C262 and C265. 267-269 (RLR) serves as a coordination point for GTP. Residue C279 coordinates [4Fe-4S] cluster.

This sequence belongs to the radical SAM superfamily. MoaA family. Monomer and homodimer. [4Fe-4S] cluster is required as a cofactor.

The enzyme catalyses GTP + AH2 + S-adenosyl-L-methionine = (8S)-3',8-cyclo-7,8-dihydroguanosine 5'-triphosphate + 5'-deoxyadenosine + L-methionine + A + H(+). It participates in cofactor biosynthesis; molybdopterin biosynthesis. Functionally, catalyzes the cyclization of GTP to (8S)-3',8-cyclo-7,8-dihydroguanosine 5'-triphosphate. The polypeptide is GTP 3',8-cyclase (Vibrio parahaemolyticus serotype O3:K6 (strain RIMD 2210633)).